We begin with the raw amino-acid sequence, 538 residues long: Putative outer membrane porin BglH (538 aa).

Residues 1–25 (MFRRNLITSAILLMAPLAFSAQSLA) form the signal peptide. Residues 52–82 (KDEEKKKYTPATVNRSVSTNDQGYAANPFPT) are disordered. The segment covering 62–73 (ATVNRSVSTNDQ) has biased composition (polar residues).

The protein belongs to the porin LamB (TC 1.B.3) family.

It is found in the cell outer membrane. May be a sugar porin with a broad carbohydrate specificity. This chain is Putative outer membrane porin BglH (bglH), found in Escherichia coli O139:H28 (strain E24377A / ETEC).